A 513-amino-acid chain; its full sequence is ATP synthase subunit alpha (513 aa).

169–176 lines the ATP pocket; the sequence is GDRQCGKT.

The protein belongs to the ATPase alpha/beta chains family. As to quaternary structure, F-type ATPases have 2 components, CF(1) - the catalytic core - and CF(0) - the membrane proton channel. CF(1) has five subunits: alpha(3), beta(3), gamma(1), delta(1), epsilon(1). CF(0) has three main subunits: a(1), b(2) and c(9-12). The alpha and beta chains form an alternating ring which encloses part of the gamma chain. CF(1) is attached to CF(0) by a central stalk formed by the gamma and epsilon chains, while a peripheral stalk is formed by the delta and b chains.

It is found in the cell inner membrane. It carries out the reaction ATP + H2O + 4 H(+)(in) = ADP + phosphate + 5 H(+)(out). In terms of biological role, produces ATP from ADP in the presence of a proton gradient across the membrane. The alpha chain is a regulatory subunit. The polypeptide is ATP synthase subunit alpha (Burkholderia orbicola (strain AU 1054)).